Consider the following 168-residue polypeptide: MAAATGAGRLRRAASALLLRSPRLPARELSAPARLYHKKVVDHYENPRNVGSLDKTSKNVGTGLVGAPACGDVMKLQIQVDEKGKIVDARFKTFGCGSAIASSSLATEWVKGKTVEEALTIKNTDIAKELCLPPVKLHCSMLAEDAIKAALADYKLKQESKKEEPEKQ.

The N-terminal 35 residues, 1–35, are a transit peptide targeting the mitochondrion; that stretch reads MAAATGAGRLRRAASALLLRSPRLPARELSAPARL. At Ser-15 the chain carries Phosphoserine. Catalysis depends on Cys-70, which acts as the Cysteine persulfide intermediate. Residue Cys-70 is modified to Cysteine persulfide. Zn(2+)-binding residues include Asp-72, Cys-96, and Cys-139. Cys-139 acts as the Cysteine persulfide intermediate in catalysis. Cys-139 carries the post-translational modification Cysteine persulfide.

It belongs to the NifU family. As to quaternary structure, homodimer; Tyr-36-mediated dimerization of two iron- and sulfide-containing ISCU subunit bind to the cysteine desulfurase complex. Component of the mitochondrial core iron-sulfur cluster (ISC) complex composed of NFS1, LYRM4, NDUFAB1, ISCU, FXN, and FDX2; this complex is a heterohexamer containing two copies of each monomer. Interacts (D-state) with NFS1 (homodimer form); each monomer interacts with the C-terminal regions of each NFS1 monomer. Interacts (monomer form) with FXN (via ferrous form); the interaction is possible when both are bound to the dimeric form of the cysteine desulfurase complex (NFS1:LYRM4) and enhances FXN interaction to the dimeric form of the cysteine desulfurase complex (NFS1:LYRM4). Interacts with GLRX5. Interacts (D-state) with HSPA9. Interacts (S-state) with HSCB; this interaction stimulates the ATPase activity of HSPA9. Component of a complex composed of FXN, NFS1, LYRM4 and ISCU. In terms of processing, cysteine persulfide is reduced by thiol-containing molecules such as glutathione and L-cysteine. Phosphorylation at Ser-15 is required for ISCU protein stabilization in the cytosol, whereas dephosphorylation of Ser-15, due to the inhibition of mTORC1 (mammalian target of rapamycin complex 1) complex, leads to degradation of the precursor form and ultimately to a decrease in the mitochondrial mature form.

The protein localises to the mitochondrion. Mitochondrial scaffold protein, of the core iron-sulfur cluster (ISC) assembly complex, that provides the structural architecture on which the [2Fe-2S] clusters are assembled. The core iron-sulfur cluster (ISC) assembly complex is involved in the de novo synthesis of a [2Fe-2S] cluster, the first step of the mitochondrial iron-sulfur protein biogenesis. This process is initiated by the cysteine desulfurase complex (NFS1:LYRM4:NDUFAB1) that produces persulfide which is delivered on the scaffold protein ISCU in a FXN-dependent manner. Then this complex is stabilized by FDX2 which provides reducing equivalents to accomplish the [2Fe-2S] cluster assembly. Finally, the [2Fe-2S] cluster is transferred from ISCU to chaperone proteins, including HSCB, HSPA9 and GLRX5. Exists as two slow interchanging conformational states, a structured (S) and disordered (D) form. May modulate NFS1 desulfurase activity in a zinc-dependent manner. Modulates the interaction between FXN and the cysteine desulfurase complex. The protein is Iron-sulfur cluster assembly enzyme ISCU of Mus musculus (Mouse).